The primary structure comprises 327 residues: Putative HTH-type transcriptional regulatory protein Mbar_A2318 (327 aa).

The HTH cro/C1-type domain occupies 132 to 190 (LKKARMGQSMSLGTLASMVGVSRRTISKYEEEGMDASIDVVLQLEDIFGVELAKPINIL). A DNA-binding region (H-T-H motif) is located at residues 143–162 (LGTLASMVGVSRRTISKYEE).

The sequence is that of Putative HTH-type transcriptional regulatory protein Mbar_A2318 from Methanosarcina barkeri (strain Fusaro / DSM 804).